We begin with the raw amino-acid sequence, 302 residues long: Glycine--tRNA ligase alpha subunit (302 aa).

It belongs to the class-II aminoacyl-tRNA synthetase family. In terms of assembly, tetramer of two alpha and two beta subunits.

Its subcellular location is the cytoplasm. The catalysed reaction is tRNA(Gly) + glycine + ATP = glycyl-tRNA(Gly) + AMP + diphosphate. The protein is Glycine--tRNA ligase alpha subunit of Xanthomonas oryzae pv. oryzae (strain MAFF 311018).